The chain runs to 309 residues: Calcium homeostasis modulator protein 5 (309 aa).

Over 1–15 (MDAFQSILKFFLNQK) the chain is Cytoplasmic. The chain crosses the membrane as a helical span at residues 16–37 (TAIGYSFMALLTVGSERLFSLV). Residues Arg32 and Val37 each contribute to the a 1,2-diacyl-sn-glycero-3-phosphate site. The Extracellular segment spans residues 38–45 (AFKCPCSV). Disulfide bonds link Cys41–Cys127, Cys43–Cys158, and Cys142–Cys149. The helical transmembrane segment at 46 to 70 (ENTAYGLVFLFAPAWVLLILGFFLN) threads the bilayer. Residues 71–99 (NKAWRLFTGCCMNPKKIFPRRRCCRFFYV) are Cytoplasmic-facing. Residues 100 to 129 (LGHIILSSLVAPVMWLSVALLNGTFYECAM) form a helical membrane-spanning segment. Asn121 serves as a coordination point for a 1,2-diacyl-sn-glycero-3-phosphate. Residues 130-174 (SGTRSTRLLEMICKGKPKECWEELHKVSCGKSSMAAMESEEVRLS) lie on the Extracellular side of the membrane. A helical membrane pass occupies residues 175–200 (LQAQSQILGWCLICSASFLSLLTTCY). Residues 201-309 (ARCRSKVSYL…MILVGTAQSL (109 aa)) are Cytoplasmic-facing. Residue Arg202 participates in a 1,2-diacyl-sn-glycero-3-phosphate binding.

This sequence belongs to the CALHM family. Oligomerizes to form undecameric cone-shaped channels.

It is found in the membrane. Its function is as follows. May assemble to form large pore channels with gating and ion conductance likely regulated by membrane lipids. This Mus musculus (Mouse) protein is Calcium homeostasis modulator protein 5.